The sequence spans 374 residues: Heme A synthase (374 aa).

The disordered stretch occupies residues 1–22; it reads MSDHIRAASSPSRHGSEHGWQH. The next 5 membrane-spanning stretches (helical) occupy residues 32–52, 118–138, 149–169, 184–204, and 226–246; these read ILVATWMFTLCFMILVMVMLG, RLWGRLIGLVLLLPLIFLAVT, LILIFVLGGLQGAVGWFMVAS, VVHLSFALLLYSALLWTALSV, and LGLVCITIIAGGFVAGIHAGL. H281 provides a ligand contact to heme. The next 3 membrane-spanning stretches (helical) occupy residues 283 to 300, 309 to 329, and 332 to 352; these read LLATLTALTALLTGLIGF, AVLPLMVAVILQYALGIATLL, and VAVPVAVVHQGMAVLLLTAAI. H340 is a binding site for heme.

The protein belongs to the COX15/CtaA family. Type 2 subfamily. In terms of assembly, interacts with CtaB. It depends on heme b as a cofactor.

It localises to the cell membrane. It carries out the reaction Fe(II)-heme o + 2 A + H2O = Fe(II)-heme a + 2 AH2. Its pathway is porphyrin-containing compound metabolism; heme A biosynthesis; heme A from heme O: step 1/1. In terms of biological role, catalyzes the conversion of heme O to heme A by two successive hydroxylations of the methyl group at C8. The first hydroxylation forms heme I, the second hydroxylation results in an unstable dihydroxymethyl group, which spontaneously dehydrates, resulting in the formyl group of heme A. The protein is Heme A synthase of Granulibacter bethesdensis (strain ATCC BAA-1260 / CGDNIH1).